The following is a 400-amino-acid chain: Homoserine O-acetyltransferase (400 aa).

The 310-residue stretch at 64-373 folds into the AB hydrolase-1 domain; it reads NAILICHALT…TDRGHDAFLL (310 aa). The active-site Nucleophile is the serine 169. Arginine 239 provides a ligand contact to substrate. Catalysis depends on residues aspartate 335 and histidine 368. Aspartate 369 lines the substrate pocket.

This sequence belongs to the AB hydrolase superfamily. MetX family. Homodimer.

Its subcellular location is the cytoplasm. It carries out the reaction L-homoserine + acetyl-CoA = O-acetyl-L-homoserine + CoA. Its pathway is amino-acid biosynthesis; L-methionine biosynthesis via de novo pathway; O-acetyl-L-homoserine from L-homoserine: step 1/1. Functionally, transfers an acetyl group from acetyl-CoA to L-homoserine, forming acetyl-L-homoserine. This Bradyrhizobium diazoefficiens (strain JCM 10833 / BCRC 13528 / IAM 13628 / NBRC 14792 / USDA 110) protein is Homoserine O-acetyltransferase.